We begin with the raw amino-acid sequence, 2158 residues long: Non-reducing polyketide synthase Preu8 (2158 aa).

The N-terminal acylcarrier protein transacylase domain (SAT) stretch occupies residues 4–241 (LVLGDQVADH…TPIPVFAPYH (238 aa)). The Ketosynthase family 3 (KS3) domain occupies 369–801 (NDKIAIVGMS…GGNTAIILED (433 aa)). Residues Cys541, His676, and His719 each act as for beta-ketoacyl synthase activity in the active site. Residues 900 to 1215 (FTFTGQGSQY…ANSVSTLFLA (316 aa)) form a malonyl-CoA:ACP transacylase (MAT) domain region. The For acyl/malonyl transferase activity role is filled by Ser989. A product template (PT) domain region spans residues 1285–1603 (SCQRIVREEL…RRVLNIMMPP (319 aa)). The tract at residues 1287–1423 (QRIVREELHA…GTVKYEDVSQ (137 aa)) is N-terminal hotdog fold. Residues 1287–1598 (QRIVREELHA…FQNIARRVLN (312 aa)) enclose the PKS/mFAS DH domain. Catalysis depends on His1319, which acts as the Proton acceptor; for dehydratase activity. The C-terminal hotdog fold stretch occupies residues 1451-1598 (AHKVLRGMAY…FQNIARRVLN (148 aa)). Asp1511 acts as the Proton donor; for dehydratase activity in catalysis. Residues 1619 to 1639 (KKAASPTLAPAKAAKPAAKTS) are compositionally biased toward low complexity. A disordered region spans residues 1619-1654 (KKAASPTLAPAKAAKPAAKTSKPSKARAKPAADSTT). Residues 1651 to 1725 (DSTTSRVMKI…QMKKFFSQYD (75 aa)) form the Carrier 1 domain. Ser1685 bears the O-(pantetheine 4'-phosphoryl)serine mark. A disordered region spans residues 1723–1779 (QYDGAPIPDDGDDSDGTDEPSNFSTPSYGADNASTPPSSAPSVNGKSSPENHEVLES). A compositionally biased stretch (acidic residues) spans 1731 to 1740 (DDGDDSDGTD). The segment covering 1743-1770 (SNFSTPSYGADNASTPPSSAPSVNGKSS) has biased composition (polar residues). In terms of domain architecture, Carrier 2 spans 1779 to 1853 (STEVSLARKI…DIENELGMRP (75 aa)). O-(pantetheine 4'-phosphoryl)serine is present on Ser1813. The disordered stretch occupies residues 1847–1879 (NELGMRPKPKPKAEAAPPKSSAKASPSANKQPQ). The segment covering 1860-1876 (EAAPPKSSAKASPSANK) has biased composition (low complexity). Residues 1894-2144 (SQYPPANSVL…NHFTMMKGDH (251 aa)) form a thioesterase (TE) domain region.

Pantetheine 4'-phosphate serves as cofactor.

In terms of biological role, non-reducing polyketide synthase; part of a gene cluster that mediates the biosynthesis of a yet unidentified natural product. This Preussia isomera (Coprophilous fungus) protein is Non-reducing polyketide synthase Preu8.